The primary structure comprises 194 residues: Imidazoleglycerol-phosphate dehydratase (194 aa).

It belongs to the imidazoleglycerol-phosphate dehydratase family.

It localises to the cytoplasm. It carries out the reaction D-erythro-1-(imidazol-4-yl)glycerol 3-phosphate = 3-(imidazol-4-yl)-2-oxopropyl phosphate + H2O. It participates in amino-acid biosynthesis; L-histidine biosynthesis; L-histidine from 5-phospho-alpha-D-ribose 1-diphosphate: step 6/9. The chain is Imidazoleglycerol-phosphate dehydratase from Streptococcus sanguinis (strain SK36).